The following is a 447-amino-acid chain: Phosphoglucosamine mutase (447 aa).

The active-site Phosphoserine intermediate is the Ser-104. Ser-104, Asp-243, Asp-245, and Asp-247 together coordinate Mg(2+). Position 104 is a phosphoserine (Ser-104).

Belongs to the phosphohexose mutase family. Mg(2+) serves as cofactor. Post-translationally, activated by phosphorylation.

The catalysed reaction is alpha-D-glucosamine 1-phosphate = D-glucosamine 6-phosphate. Its function is as follows. Catalyzes the conversion of glucosamine-6-phosphate to glucosamine-1-phosphate. The sequence is that of Phosphoglucosamine mutase from Corynebacterium diphtheriae (strain ATCC 700971 / NCTC 13129 / Biotype gravis).